The chain runs to 108 residues: Tetrahydromethanopterin S-methyltransferase subunit B (108 aa).

The helical transmembrane segment at 79-99 threads the bilayer; the sequence is GMFFGFWVTMAILVLVTILAV.

The protein belongs to the MtrB family. The complex is composed of 8 subunits; MtrA, MtrB, MtrC, MtrD, MtrE, MtrF, MtrG and MtrH.

It localises to the cell membrane. The enzyme catalyses 5-methyl-5,6,7,8-tetrahydromethanopterin + coenzyme M + 2 Na(+)(in) = 5,6,7,8-tetrahydromethanopterin + methyl-coenzyme M + 2 Na(+)(out). It participates in one-carbon metabolism; methanogenesis from CO(2); methyl-coenzyme M from 5,10-methylene-5,6,7,8-tetrahydromethanopterin: step 2/2. Part of a complex that catalyzes the formation of methyl-coenzyme M and tetrahydromethanopterin from coenzyme M and methyl-tetrahydromethanopterin. This is an energy-conserving, sodium-ion translocating step. This Methanococcus maripaludis (strain C5 / ATCC BAA-1333) protein is Tetrahydromethanopterin S-methyltransferase subunit B.